The sequence spans 303 residues: ATP synthase gamma chain (303 aa).

It belongs to the ATPase gamma chain family. F-type ATPases have 2 components, CF(1) - the catalytic core - and CF(0) - the membrane proton channel. CF(1) has five subunits: alpha(3), beta(3), gamma(1), delta(1), epsilon(1). CF(0) has three main subunits: a, b and c.

It is found in the cell membrane. Functionally, produces ATP from ADP in the presence of a proton gradient across the membrane. The gamma chain is believed to be important in regulating ATPase activity and the flow of protons through the CF(0) complex. The polypeptide is ATP synthase gamma chain (Nocardioides sp. (strain ATCC BAA-499 / JS614)).